Here is a 1429-residue protein sequence, read N- to C-terminus: Nitric oxide synthase 1 (1429 aa).

The interval Met1 to Leu200 is interaction with NOSIP. The 83-residue stretch at Ser17–Gly99 folds into the PDZ domain. Disordered regions lie at residues Val152–Gln174, Gly214–Arg255, and Asn271–Pro298. Low complexity predominate over residues Gln160–Gln174. The interaction with DYNLL1/PIN stretch occupies residues Gln163–Asp240. The span at Ala226–Ser243 shows a compositional bias: basic and acidic residues. Ser280 carries the phosphoserine modification. The segment covering Ser280–Pro294 has biased composition (polar residues). Residue Ser334 participates in (6R)-L-erythro-5,6,7,8-tetrahydrobiopterin binding. Cys415 lines the heme b pocket. The L-arginine site is built by Gln478, Trp587, Tyr588, and Glu592. Val677, Trp678, and Phe691 together coordinate (6R)-L-erythro-5,6,7,8-tetrahydrobiopterin. Position 706 (Tyr706) interacts with heme b. The interval Lys725–Met745 is calmodulin-binding. The Flavodoxin-like domain occupies Ala755–Phe935. FMN-binding residues include Thr761, Glu762, Thr763, Lys765, Ser766, Ser807, Thr808, and Gly812. Phosphoserine occurs at positions 847, 857, and 858. Residues Ser886, His891, Cys893, Glu919, and Gln923 each contribute to the FMN site. Residues Lys990 to Pro1237 form the FAD-binding FR-type domain. Residue Arg1010 coordinates NADP(+). FAD is bound by residues His1032, Arg1173, Tyr1174, Tyr1175, Ser1176, Thr1191, and Ala1193. Residue Ser1196 participates in NADP(+) binding. Residues Tyr1197, Val1210, Cys1211, and Ser1212 each coordinate FAD. Positions 1251, 1284, 1313, 1314, 1320, 1322, 1324, 1357, 1398, and 1400 each coordinate NADP(+).

Belongs to the NOS family. As to quaternary structure, homodimer. Interacts with DLG4 (via N-terminal tandem pair of PDZ domains); the interaction possibly being prevented by the association between NOS1 and CAPON. Forms a ternary complex with CAPON and RASD1. Forms a ternary complex with CAPON and SYN1. Interacts with ZDHHC23. Interacts with NOSIP; which may impair its synaptic location. Interacts with HTR4. Interacts with SLC6A4. Interacts with VAC14. Forms a complex with ASL, ASS1 and SLC7A1; the complex regulates cell-autonomous L-arginine synthesis and citrulline recycling while channeling extracellular L-arginine to nitric oxide synthesis pathway. Interacts with DMD; localizes NOS1 to sarcolemma in muscle cells. Interacts with DYNLL1; inhibits the nitric oxide synthase activity. The cofactor is heme b. FAD serves as cofactor. Requires FMN as cofactor. (6R)-L-erythro-5,6,7,8-tetrahydrobiopterin is required as a cofactor. In terms of processing, ubiquitinated; mediated by STUB1/CHIP in the presence of Hsp70 and Hsp40 (in vitro). In terms of tissue distribution, isoform N-NOS-1 is expressed in brain and colorectum. Found in the Auerbach's plexus of the enteric nervous system. Isoform PNNOS is expressed in the penis, urethra, prostate, and skeletal muscle, and coexists with the cerebellar nnos in the pelvic plexus, bladder and liver, and is detectable in the cerebellum.

It is found in the cell membrane. The protein localises to the sarcolemma. It localises to the cell projection. Its subcellular location is the dendritic spine. The enzyme catalyses 2 L-arginine + 3 NADPH + 4 O2 + H(+) = 2 L-citrulline + 2 nitric oxide + 3 NADP(+) + 4 H2O. With respect to regulation, stimulated by calcium/calmodulin. Inhibited by DYNLL1 that prevents the dimerization of the protein. Inhibited by NOSIP. Produces nitric oxide (NO) which is a messenger molecule with diverse functions throughout the body. In the brain and peripheral nervous system, NO displays many properties of a neurotransmitter. Inhibitory transmitter for non-adrenergic and non-cholinergic nerves in the colorectum. Probably has nitrosylase activity and mediates cysteine S-nitrosylation of cytoplasmic target proteins such SRR. Inhibitory transmitter for non-adrenergic and non-cholinergic nerves in the colorectum. In Rattus norvegicus (Rat), this protein is Nitric oxide synthase 1.